The primary structure comprises 235 residues: Phosphoribosylaminoimidazole-succinocarboxamide synthase (235 aa).

Belongs to the SAICAR synthetase family.

The enzyme catalyses 5-amino-1-(5-phospho-D-ribosyl)imidazole-4-carboxylate + L-aspartate + ATP = (2S)-2-[5-amino-1-(5-phospho-beta-D-ribosyl)imidazole-4-carboxamido]succinate + ADP + phosphate + 2 H(+). It functions in the pathway purine metabolism; IMP biosynthesis via de novo pathway; 5-amino-1-(5-phospho-D-ribosyl)imidazole-4-carboxamide from 5-amino-1-(5-phospho-D-ribosyl)imidazole-4-carboxylate: step 1/2. In Clostridium botulinum (strain Alaska E43 / Type E3), this protein is Phosphoribosylaminoimidazole-succinocarboxamide synthase.